A 414-amino-acid polypeptide reads, in one-letter code: Transforming growth factor beta-2 proprotein (414 aa).

Positions 1–20 are cleaved as a signal peptide; that stretch reads MHYCVLSAFLLLHLVTAALS. N72, N140, and N241 each carry an N-linked (GlcNAc...) asparagine glycan. 4 disulfide bridges follow: C309–C318, C317–C380, C346–C411, and C350–C413.

It belongs to the TGF-beta family. As to quaternary structure, interacts with the serine proteases, HTRA1 and HTRA3. Interacts with ASPN. Interacts with MFAP5. In terms of assembly, interacts with Transforming growth factor beta-2 (TGF-beta-2) chain; interaction is non-covalent and maintains (TGF-beta-2) in a latent state. Interacts with LRRC32/GARP; leading to regulate activation of TGF-beta-2. Interacts with NREP; the interaction results in a decrease in TGFB2 autoinduction. Transforming growth factor beta-2: Homodimer; disulfide-linked. Transforming growth factor beta-2: Interacts with TGF-beta receptors (TGFBR1 and TGFBR2), leading to signal transduction. The precursor proprotein is cleaved in the Golgi apparatus to form Transforming growth factor beta-2 (TGF-beta-2) and Latency-associated peptide (LAP) chains, which remain non-covalently linked, rendering TGF-beta-2 inactive.

It localises to the secreted. It is found in the extracellular space. Its subcellular location is the extracellular matrix. Precursor of the Latency-associated peptide (LAP) and Transforming growth factor beta-2 (TGF-beta-2) chains, which constitute the regulatory and active subunit of TGF-beta-2, respectively. Its function is as follows. Required to maintain the Transforming growth factor beta-2 (TGF-beta-2) chain in a latent state during storage in extracellular matrix. Associates non-covalently with TGF-beta-2 and regulates its activation via interaction with 'milieu molecules', such as LTBP1 and LRRC32/GARP, that control activation of TGF-beta-2. In terms of biological role, multifunctional protein that regulates various processes such as angiogenesis and heart development. Activation into mature form follows different steps: following cleavage of the proprotein in the Golgi apparatus, Latency-associated peptide (LAP) and Transforming growth factor beta-2 (TGF-beta-2) chains remain non-covalently linked rendering TGF-beta-2 inactive during storage in extracellular matrix. At the same time, LAP chain interacts with 'milieu molecules', such as LTBP1 and LRRC32/GARP, that control activation of TGF-beta-2 and maintain it in a latent state during storage in extracellular milieus. Once activated following release of LAP, TGF-beta-2 acts by binding to TGF-beta receptors (TGFBR1 and TGFBR2), which transduce signal. This Mustela putorius furo (European domestic ferret) protein is Transforming growth factor beta-2 proprotein (TGFB2).